Here is a 346-residue protein sequence, read N- to C-terminus: Putative agmatine deiminase (346 aa).

Residue Cys-338 is the Amidino-cysteine intermediate of the active site.

It belongs to the agmatine deiminase family.

It carries out the reaction agmatine + H2O = N-carbamoylputrescine + NH4(+). The chain is Putative agmatine deiminase from Streptomyces avermitilis (strain ATCC 31267 / DSM 46492 / JCM 5070 / NBRC 14893 / NCIMB 12804 / NRRL 8165 / MA-4680).